We begin with the raw amino-acid sequence, 93 residues long: Small ribosomal subunit protein uS19 (93 aa).

This sequence belongs to the universal ribosomal protein uS19 family.

Protein S19 forms a complex with S13 that binds strongly to the 16S ribosomal RNA. The polypeptide is Small ribosomal subunit protein uS19 (Lawsonia intracellularis (strain PHE/MN1-00)).